The following is a 349-amino-acid chain: Thylakoid lumenal 29 kDa protein, chloroplastic (349 aa).

S155 bears the Phosphoserine mark.

It belongs to the peroxidase family.

Its subcellular location is the plastid. It localises to the chloroplast thylakoid lumen. The sequence is that of Thylakoid lumenal 29 kDa protein, chloroplastic (TL29) from Arabidopsis thaliana (Mouse-ear cress).